The sequence spans 582 residues: Fructose-1,6-bisphosphatase class 3 (582 aa).

This sequence belongs to the FBPase class 3 family. The cofactor is Mn(2+).

It carries out the reaction beta-D-fructose 1,6-bisphosphate + H2O = beta-D-fructose 6-phosphate + phosphate. It functions in the pathway carbohydrate biosynthesis; gluconeogenesis. This is Fructose-1,6-bisphosphatase class 3 from Saccharophagus degradans (strain 2-40 / ATCC 43961 / DSM 17024).